The sequence spans 938 residues: AP-2 complex subunit alpha-2 (938 aa).

Residues 11–12, Lys43, Tyr53, and 57–61 each bind a 1,2-diacyl-sn-glycero-3-phospho-(1D-myo-inositol-3,4,5-trisphosphate); these read RG and KYVCK. Residues 615-681 form a disordered region; the sequence is LKKKKGPSTV…TGPPPSSGGG (67 aa). Over residues 646 to 667 the composition is skewed to low complexity; it reads PASTSAASTPSPSADLLGLGAV. Positions 668-677 are enriched in pro residues; that stretch reads PPAPTGPPPS.

It belongs to the adaptor complexes large subunit family. Adaptor protein complex 2 (AP-2) is a heterotetramer composed of two large adaptins (alpha-type subunit AP2A1 or AP2A2 and beta-type subunit AP2B1), a medium adaptin (mu-type subunit AP2M1) and a small adaptin (sigma-type subunit AP2S1). Interacts with clathrin. Binds EPN1, EPS15, AMPH, SNAP91 and BIN1. Interacts with HIP1. Interacts with DGKD. Interacts with DENND1A, DENND1B and DENND1C. Interacts with FCHO1 and DAB2. Interacts with ATAT1; this interaction is required for efficient alpha-tubulin acetylation by ATAT1. Interacts with KIAA1107. Together with AP2B1 and AP2M1, it interacts with ADAM10; this interaction facilitates ADAM10 endocytosis from the plasma membrane during long-term potentiation in hippocampal neurons. Interacts with CLN3 (via dileucine motif). Interacts with ABCB11; this interaction regulates cell membrane expression of ABCB11 through its internalization in a clathrin-dependent manner and its subsequent degradation. Interacts with Cacfd1. Interacts with DNAJC6. Widely expressed.

The protein resides in the cell membrane. The protein localises to the membrane. It localises to the coated pit. In terms of biological role, component of the adaptor protein complex 2 (AP-2). Adaptor protein complexes function in protein transport via transport vesicles in different membrane traffic pathways. Adaptor protein complexes are vesicle coat components and appear to be involved in cargo selection and vesicle formation. AP-2 is involved in clathrin-dependent endocytosis in which cargo proteins are incorporated into vesicles surrounded by clathrin (clathrin-coated vesicles, CCVs) which are destined for fusion with the early endosome. The clathrin lattice serves as a mechanical scaffold but is itself unable to bind directly to membrane components. Clathrin-associated adaptor protein (AP) complexes which can bind directly to both the clathrin lattice and to the lipid and protein components of membranes are considered to be the major clathrin adaptors contributing the CCV formation. AP-2 also serves as a cargo receptor to selectively sort the membrane proteins involved in receptor-mediated endocytosis. AP-2 seems to play a role in the recycling of synaptic vesicle membranes from the presynaptic surface. AP-2 recognizes Y-X-X-[FILMV] (Y-X-X-Phi) and [ED]-X-X-X-L-[LI] endocytosis signal motifs within the cytosolic tails of transmembrane cargo molecules. AP-2 may also play a role in maintaining normal post-endocytic trafficking through the ARF6-regulated, non-clathrin pathway. During long-term potentiation in hippocampal neurons, AP-2 is responsible for the endocytosis of ADAM10. The AP-2 alpha subunit binds polyphosphoinositide-containing lipids, positioning AP-2 on the membrane. The AP-2 alpha subunit acts via its C-terminal appendage domain as a scaffolding platform for endocytic accessory proteins. The AP-2 alpha and AP-2 sigma subunits are thought to contribute to the recognition of the [ED]-X-X-X-L-[LI] motif. The polypeptide is AP-2 complex subunit alpha-2 (Rattus norvegicus (Rat)).